Here is a 220-residue protein sequence, read N- to C-terminus: Protein ABA DEFICIENT 4, chloroplastic (220 aa).

The transit peptide at 1–37 (MGFSSFISQPLSSSLSVMKRNVSAKRSELCLDSSKIR) directs the protein to the chloroplast. The next 4 helical transmembrane spans lie at 77 to 97 (IASS…TLMV), 112 to 132 (SVPY…SWTP), 154 to 174 (MFSS…VDLF), and 195 to 215 (SLCL…KAII).

In terms of tissue distribution, expressed in root vasculature, root hairs, leaves, trichomes, sepals, stamens, stigma, pedicels, siliques and embryo.

It localises to the plastid. The protein resides in the chloroplast membrane. Functionally, required for neoxanthin biosynthesis, an intermediary step in abscisic acid (ABA) biosynthesis. Probably not involved directly in the enzymatic conversion of violaxanthin to neoxanthin. Cannot convert violaxanthin to neoxanthin in vitro. Required for ABA biosynthesis in response to drought stress. Required for neoxanthin biosynthesis which is involved in photoprotection of photosystem II (PSII). Neoxanthin acts as an antioxidant within the photosystem PSII supercomplex. The protein is Protein ABA DEFICIENT 4, chloroplastic of Arabidopsis thaliana (Mouse-ear cress).